Reading from the N-terminus, the 319-residue chain is MKSSHPVNFQQMILALQEYWASQGCVLLQPFDMEVGAGTFHPATFLRAIGPEPWRAAYVQPSRRPTDGRYGDNPNRTQHYYQFQVVLKPSPDDIQDIYLGSLKALGIDPLTHDIRFVEDNWEAPTLGSWGVGWEVWQDGMEITQFTYFQQIGGLECKPVTGEITYGLERLAMFLQGIDNMFDLVWTEGPNGRVTYGQIFQQNEVEMSAYNFEYANVEALFNFFDFYEKEASQLIEVHLPLAAYEMVLKASHTFNLLDARQAISVTERQRFILRVRKLAQAVAEAYYSAREKLGFPMLEEISSSSSRVLPLAGNDRVKGC.

It belongs to the class-II aminoacyl-tRNA synthetase family. Tetramer of two alpha and two beta subunits.

The protein localises to the cytoplasm. It catalyses the reaction tRNA(Gly) + glycine + ATP = glycyl-tRNA(Gly) + AMP + diphosphate. The chain is Glycine--tRNA ligase alpha subunit from Coxiella burnetii (strain CbuK_Q154) (Coxiella burnetii (strain Q154)).